Consider the following 412-residue polypeptide: Isocitrate dehydrogenase [NADP] (412 aa).

An NADP(+)-binding site is contributed by Thr-100. The D-threo-isocitrate site is built by Ser-109, Asn-111, Arg-115, Arg-125, and Arg-149. Asp-301 provides a ligand contact to Mg(2+). Residues 333 to 339 (HGSAPKY), Asn-346, Tyr-385, and Arg-389 contribute to the NADP(+) site.

The protein belongs to the isocitrate and isopropylmalate dehydrogenases family. In terms of assembly, homodimer. Mg(2+) serves as cofactor. It depends on Mn(2+) as a cofactor.

The catalysed reaction is D-threo-isocitrate + NADP(+) = 2-oxoglutarate + CO2 + NADPH. Catalyzes the oxidative decarboxylation of isocitrate to 2-oxoglutarate and carbon dioxide with the concomitant reduction of NADP(+). NAD(+) can replace NADP(+) with low efficiency. The sequence is that of Isocitrate dehydrogenase [NADP] from Archaeoglobus fulgidus (strain ATCC 49558 / DSM 4304 / JCM 9628 / NBRC 100126 / VC-16).